Consider the following 440-residue polypeptide: Na(+)/H(+) antiporter NhaA (440 aa).

A run of 11 helical transmembrane segments spans residues 25 to 45 (FLHIEATSGLVLILCTVVALV), 76 to 96 (LHHVINDGLMAVFFFVIGLEV), 112 to 132 (TLPIAAAIGGMIVPATLYLSM), 141 to 161 (GWGIPMATDIAFVVGCLAILG), 170 to 190 (VLLLSLAIVDDIGAILVIAIG), 194 to 214 (SLDGRYLFLAAVAVGAVHFLS), 225 to 245 (VIVGVLAWIALHESGIHATLI), 312 to 332 (HPWTAYVIMPVFALANAGVLI), 345 to 365 (VVIGLVVGKPLGIALFSWLVI), 378 to 398 (WPILMSGSFLAGIGFTMALFI), and 414 to 434 (GVLVGSAISAIAGMGLLLWTL).

The protein belongs to the NhaA Na(+)/H(+) (TC 2.A.33) antiporter family.

The protein resides in the cell inner membrane. It carries out the reaction Na(+)(in) + 2 H(+)(out) = Na(+)(out) + 2 H(+)(in). Functionally, na(+)/H(+) antiporter that extrudes sodium in exchange for external protons. The chain is Na(+)/H(+) antiporter NhaA from Rhodopirellula baltica (strain DSM 10527 / NCIMB 13988 / SH1).